A 223-amino-acid polypeptide reads, in one-letter code: Endonuclease NucS (223 aa).

This sequence belongs to the NucS endonuclease family.

Its subcellular location is the cytoplasm. Its function is as follows. Cleaves both 3' and 5' ssDNA extremities of branched DNA structures. The sequence is that of Endonuclease NucS from Streptomyces griseus subsp. griseus (strain JCM 4626 / CBS 651.72 / NBRC 13350 / KCC S-0626 / ISP 5235).